A 185-amino-acid chain; its full sequence is Elongation factor P (185 aa).

Belongs to the elongation factor P family.

The protein localises to the cytoplasm. Its pathway is protein biosynthesis; polypeptide chain elongation. Involved in peptide bond synthesis. Stimulates efficient translation and peptide-bond synthesis on native or reconstituted 70S ribosomes in vitro. Probably functions indirectly by altering the affinity of the ribosome for aminoacyl-tRNA, thus increasing their reactivity as acceptors for peptidyl transferase. The protein is Elongation factor P of Trichodesmium erythraeum (strain IMS101).